The sequence spans 230 residues: Lactate utilization protein C (230 aa).

Belongs to the LutC/YkgG family.

Its function is as follows. Is involved in L-lactate degradation and allows cells to grow with lactate as the sole carbon source. The polypeptide is Lactate utilization protein C (Exiguobacterium sp. (strain ATCC BAA-1283 / AT1b)).